Here is a 944-residue protein sequence, read N- to C-terminus: DNA ligase 4 (944 aa).

9 residues coordinate ATP: glutamate 280, lysine 282, arginine 287, glutamate 340, phenylalanine 382, glutamate 442, lysine 447, lysine 464, and lysine 466. Lysine 282 serves as the catalytic N6-AMP-lysine intermediate. Glutamate 340 lines the Mg(2+) pocket. Mg(2+) is bound at residue glutamate 442. BRCT domains lie at proline 681–cysteine 780 and phenylalanine 836–valine 941.

This sequence belongs to the ATP-dependent DNA ligase family. As to quaternary structure, component of the DNA ligase IV complex, composed of DNL4, LIF1 and NEJ1. Interacts (via BRCT domain) with LIF1. Interacts with NEJ1. Interacts with POL4 in the DNL4-LIF1 complex. Mg(2+) serves as cofactor.

It localises to the nucleus. It carries out the reaction ATP + (deoxyribonucleotide)n-3'-hydroxyl + 5'-phospho-(deoxyribonucleotide)m = (deoxyribonucleotide)n+m + AMP + diphosphate.. Its function is as follows. DNA ligase involved in DNA non-homologous end joining (NHEJ); required for double-strand break (DSB) repair. The sequence is that of DNA ligase 4 (DNL4) from Saccharomyces cerevisiae (strain ATCC 204508 / S288c) (Baker's yeast).